Here is a 401-residue protein sequence, read N- to C-terminus: Elongation factor Tu (401 aa).

The region spanning 10–209 (KPHINVGTIG…AVDEYIPTPQ (200 aa)) is the tr-type G domain. The segment at 19 to 26 (GHVDHGKT) is G1. 19–26 (GHVDHGKT) contributes to the GTP binding site. Threonine 26 is a Mg(2+) binding site. Positions 60–64 (GITIA) are G2. The tract at residues 81 to 84 (DCPG) is G3. GTP is bound by residues 81–85 (DCPGH) and 136–139 (NKVD). The G4 stretch occupies residues 136–139 (NKVD). Residues 174–176 (SAR) are G5.

This sequence belongs to the TRAFAC class translation factor GTPase superfamily. Classic translation factor GTPase family. EF-Tu/EF-1A subfamily. Monomer.

Its subcellular location is the cytoplasm. It carries out the reaction GTP + H2O = GDP + phosphate + H(+). Its function is as follows. GTP hydrolase that promotes the GTP-dependent binding of aminoacyl-tRNA to the A-site of ribosomes during protein biosynthesis. This chain is Elongation factor Tu, found in Chloroflexus aurantiacus (strain ATCC 29366 / DSM 635 / J-10-fl).